We begin with the raw amino-acid sequence, 390 residues long: 3-ketoacyl-CoA thiolase (390 aa).

Residue Cys95 is the Acyl-thioester intermediate of the active site. Catalysis depends on proton acceptor residues His346 and Cys376.

It belongs to the thiolase-like superfamily. Thiolase family. As to quaternary structure, heterotetramer of two alpha chains (FadB) and two beta chains (FadA).

Its subcellular location is the cytoplasm. It carries out the reaction an acyl-CoA + acetyl-CoA = a 3-oxoacyl-CoA + CoA. The protein operates within lipid metabolism; fatty acid beta-oxidation. Its function is as follows. Catalyzes the final step of fatty acid oxidation in which acetyl-CoA is released and the CoA ester of a fatty acid two carbons shorter is formed. The polypeptide is 3-ketoacyl-CoA thiolase (Psychrobacter sp. (strain PRwf-1)).